The chain runs to 72 residues: Conotoxin 3 (72 aa).

The first 22 residues, 1 to 22 (MKLTCVVIVAVLLLTACQLITA), serve as a signal peptide directing secretion. Residues 23 to 46 (DDSRGTQEHRALRSDTKLSMLTLR) constitute a propeptide that is removed on maturation. 3 disulfide bridges follow: Cys47/Cys61, Cys54/Cys64, and Cys60/Cys71.

The protein belongs to the conotoxin O1 superfamily. Expressed by the venom duct.

The protein localises to the secreted. The sequence is that of Conotoxin 3 from Conus striatus (Striated cone).